Reading from the N-terminus, the 513-residue chain is Histone acetyltransferase KAT5 (513 aa).

The region spanning 8-65 (IEGCRLPVLRRNQDNEDEWPLAEILSVKDISGRKLFYVHYIDFNKRLDEWVTHERLDL) is the Tudor-knot domain. An N6-acetyllysine modification is found at Lys52. A disordered region spans residues 69–106 (QFPKKEAKTPTKNGLPGSRPGSPEREVPASAQASGKTL). Phosphoserine is present on Ser86. Ser90 is modified (phosphoserine; by CDK1 and CDK9). Residues Lys104 and Lys120 each carry the N6-acetyllysine; by autocatalysis modification. Positions 122 to 217 (REAIPGGEPD…SAPRMTGSLV (96 aa)) are disordered. Residues 133 to 144 (PLSSSSCLQPNH) show a composition bias toward polar residues. N6-acetyllysine; by autocatalysis is present on residues Lys148, Lys150, Lys187, and Lys189. A Phosphoserine modification is found at Ser199. The MYST-type HAT domain maps to 227-504 (TRMKNIECIE…IDSKCLHFTP (278 aa)). The segment at 260–285 (LYLCEFCLKYGRSLKCLQRHLTKCDL) adopts a C2HC MYST-type zinc-finger fold. Lys327 bears the N6-acetyllysine; by autocatalysis mark. Residues 368-513 (ACILTLPPYQ…PKDWSKRGKW (146 aa)) are interaction with ATF2. Acetyl-CoA-binding positions include 370–372 (ILT) and 377–383 (QRRGYGK). Glu403 acts as the Proton donor/acceptor in catalysis. 2 residues coordinate acetyl-CoA: Ser407 and Ser416. Lys430 is covalently cross-linked (Glycyl lysine isopeptide (Lys-Gly) (interchain with G-Cter in SUMO1); alternate). Lys430 participates in a covalent cross-link: Glycyl lysine isopeptide (Lys-Gly) (interchain with G-Cter in SUMO2); alternate. Lys451 is covalently cross-linked (Glycyl lysine isopeptide (Lys-Gly) (interchain with G-Cter in SUMO1)).

Belongs to the MYST (SAS/MOZ) family. Component of the NuA4 histone acetyltransferase complex which contains the catalytic subunit KAT5/TIP60 and the subunits EP400, TRRAP/PAF400, BRD8/SMAP, EPC1, DMAP1/DNMAP1, RUVBL1/TIP49, RUVBL2, ING3, actin, ACTL6A/BAF53A, MORF4L1/MRG15, MORF4L2/MRGX, MRGBP, YEATS4/GAS41, VPS72/YL1 and MEAF6. KAT5/TIP60, EPC1, and ING3 together constitute a minimal HAT complex termed Piccolo NuA4. The NuA4 complex interacts with MYC. Interacts with ATM. Interacts with JADE1. Interacts with PLA2G4A/CPLA2, EDNRA and HDAC7. Interacts with the cytoplasmic tail of APP and APBB1/FE65. Interacts with TRIM24 and TRIM68. Forms a complex with SENP6 and UBE2I in response to UV irradiation. Identified in a complex with HINT1. Interacts with ATF2 and CUL3. Interacts with NR1D2 (via N-terminus). Component of a SWR1-like complex. Interacts with FOXP3. Interacts with ZBTB49. Interacts with SRF. Interacts with ATF3; promoting autoacetylation and deubiquitination by USP7. Interacts with EP300/p300; interaction promotes KAT5 autoacetylation. Interacts with PRKDC; interaction is impaired following KAT5 sumoylation. Interacts with GPR50. Interacts with NME3; this interaction enables recruitment of NME3 at DNA damage sites where it plays a role in the repair of DNA. Phosphorylated on Ser-86 and Ser-90; enhanced during G2/M phase. The phosphorylated form has a higher activity. Phosphorylation at Ser-90 by CDK1 or CDK9 is a prerequisite for phosphorylation at Ser-86 by GSK3. Phosphorylation at Ser-86 by GSK3 (GSK3A or GSK3B) activates acetyltransferase and acyltransferase activity. Phosphorylation at Ser-90 by CDK9 promotes KAT5 recruitment to chromatin. Phosphorylation by VRK1 following DNA damage promotes KAT5 association with chromatin and histone acetyltransferase activity. In terms of processing, autoacetylated. Autoacetylation is required for histone acetyltransferase activity. Autoacetylation at Lys-327 is facilitated by interaction with EP300/p300: it prevents ubiquitination and subsequent degradation by the proteasome and promotes acetylation of target proteins. Deacetylated by HDAC3 and SIRT1. Deacetylation by HDAC3 promotes its ubiquitination and cytoplasmic localization. Post-translationally, sumoylated by UBE2I at Lys-430 and Lys-451, leading to increase of its histone acetyltransferase activity in UV-induced DNA damage response, as well as its translocation to nuclear bodies. Sumoylation with SUMO2 by PIAS4 at Lys-430 promotes repair of DNA double-strand breaks (DSBs) via homologous recombination (HR). Sumoylation by PIAS4 impairs interaction with PRKDC, inhibiting non-homologous end joining (NHEJ)-mediated repair of DSBs, thereby facilitating HR. Desumoylated by SENP3. Ubiquitinated by MDM2, leading to its proteasome-dependent degradation. Ubiquitination is prevented by autoacetylation at Lys-327. Ubiquitinated following deacetylation by HDAC3, leading to cytoplasmic localization. Deubiquitinated by USP7 following interaction with ATF3, promoting its stabilization. As to expression, expressed in testis, heart, brain, kidney and liver. Weakly expressed in lung.

It is found in the nucleus. The protein resides in the chromosome. Its subcellular location is the cytoplasm. The protein localises to the centromere. It localises to the kinetochore. It is found in the cytoskeleton. The protein resides in the spindle pole. Its subcellular location is the nucleolus. The protein localises to the perinuclear region. It carries out the reaction L-lysyl-[histone] + acetyl-CoA = N(6)-acetyl-L-lysyl-[histone] + CoA + H(+). The catalysed reaction is L-lysyl-[protein] + acetyl-CoA = N(6)-acetyl-L-lysyl-[protein] + CoA + H(+). It catalyses the reaction (2E)-butenoyl-CoA + L-lysyl-[protein] = N(6)-(2E)-butenoyl-L-lysyl-[protein] + CoA + H(+). The enzyme catalyses 2-hydroxyisobutanoyl-CoA + L-lysyl-[protein] = N(6)-(2-hydroxyisobutanoyl)-L-lysyl-[protein] + CoA + H(+). It carries out the reaction (S)-lactoyl-CoA + L-lysyl-[protein] = N(6)-[(S)-lactoyl]-L-lysyl-[protein] + CoA + H(+). With respect to regulation, acyltransferase and acetyltransferase activities are activated by phosphorylation and autoacetylation. Autoacetylation activates the histone acetyltransferase activity. Functionally, catalytic subunit of the NuA4 histone acetyltransferase complex, a multiprotein complex involved in transcriptional activation of select genes principally by acetylation of nucleosomal histones H2A and H4. Histone acetylation alters nucleosome-DNA interactions and promotes interaction of the modified histones with other proteins which positively regulate transcription. The NuA4 histone acetyltransferase complex is required for the activation of transcriptional programs associated with proto-oncogene mediated growth induction, tumor suppressor mediated growth arrest and replicative senescence, apoptosis, and DNA repair. The NuA4 complex plays a direct role in repair of DNA double-strand breaks (DSBs) by promoting homologous recombination (HR): the complex inhibits TP53BP1 binding to chromatin via MBTD1, which recognizes and binds histone H4 trimethylated at 'Lys-20' (H4K20me), and KAT5 that catalyzes acetylation of 'Lys-15' of histone H2A (H2AK15ac), thereby blocking the ubiquitination mark required for TP53BP1 localization at DNA breaks. Also involved in DSB repair by mediating acetylation of 'Lys-5' of histone H2AX (H2AXK5ac), promoting NBN/NBS1 assembly at the sites of DNA damage. The NuA4 complex plays a key role in hematopoietic stem cell maintenance and is required to maintain acetylated H2A.Z/H2AZ1 at MYC target genes. The NuA4 complex is also required for spermatid development by promoting acetylation of histones: histone hyperacetylation is required for histone replacement during the transition from round to elongating spermatids. Component of a SWR1-like complex that specifically mediates the removal of histone H2A.Z/H2AZ1 from the nucleosome. Also acetylates non-histone proteins, such as BMAL1, ATM, AURKB, CHKA, CGAS, ERCC4/XPF, LPIN1, TP53/p53, NDC80/HEC1, NR1D2, RAN, SOX4, FOXP3, SQSTM1, ULK1 and RUBCNL/Pacer. Directly acetylates and activates ATM. Promotes nucleotide excision repair (NER) by mediating acetylation of ERCC4/XPF, thereby promoting formation of the ERCC4-ERCC1 complex. Relieves NR1D2-mediated inhibition of APOC3 expression by acetylating NR1D2. Acts as a regulator of regulatory T-cells (Treg) by catalyzing FOXP3 acetylation, thereby promoting FOXP3 transcriptional repressor activity. Involved in skeletal myoblast differentiation by mediating acetylation of SOX4. Catalyzes acetylation of APBB1/FE65, increasing its transcription activator activity. Promotes transcription elongation during the activation phase of the circadian cycle by catalyzing acetylation of BMAL1, promoting elongation of circadian transcripts. Together with GSK3 (GSK3A or GSK3B), acts as a regulator of autophagy: phosphorylated at Ser-86 by GSK3 under starvation conditions, leading to activate acetyltransferase activity and promote acetylation of key autophagy regulators, such as ULK1 and RUBCNL/Pacer. Acts as a regulator of the cGAS-STING innate antiviral response by catalyzing acetylation the N-terminus of CGAS, thereby promoting CGAS DNA-binding and activation. Also regulates lipid metabolism by mediating acetylation of CHKA or LPIN1. Promotes lipolysis of lipid droplets following glucose deprivation by mediating acetylation of isoform 1 of CHKA, thereby promoting monomerization of CHKA and its conversion into a tyrosine-protein kinase. Acts as a regulator of fatty-acid-induced triacylglycerol synthesis by catalyzing acetylation of LPIN1, thereby promoting the synthesis of diacylglycerol. In addition to protein acetyltransferase, can use different acyl-CoA substrates, such as (2E)-butenoyl-CoA (crotonyl-CoA), S-lactoyl-CoA (lactyl-CoA) and 2-hydroxyisobutanoyl-CoA (2-hydroxyisobutyryl-CoA), and is able to mediate protein crotonylation, lactylation and 2-hydroxyisobutyrylation, respectively. Acts as a key regulator of chromosome segregation and kinetochore-microtubule attachment during mitosis by mediating acetylation or crotonylation of target proteins. Catalyzes acetylation of AURKB at kinetochores, increasing AURKB activity and promoting accurate chromosome segregation in mitosis. Acetylates RAN during mitosis, promoting microtubule assembly at mitotic chromosomes. Acetylates NDC80/HEC1 during mitosis, promoting robust kinetochore-microtubule attachment. Catalyzes crotonylation of MAPRE1/EB1, thereby ensuring accurate spindle positioning in mitosis. Catalyzes lactylation of NBN/NBS1 in response to DNA damage, thereby promoting DNA double-strand breaks (DSBs) via homologous recombination (HR). This Mus musculus (Mouse) protein is Histone acetyltransferase KAT5.